The primary structure comprises 292 residues: ATP synthase gamma chain (292 aa).

Belongs to the ATPase gamma chain family. In terms of assembly, F-type ATPases have 2 components, CF(1) - the catalytic core - and CF(0) - the membrane proton channel. CF(1) has five subunits: alpha(3), beta(3), gamma(1), delta(1), epsilon(1). CF(0) has three main subunits: a, b and c.

The protein resides in the cell inner membrane. Its function is as follows. Produces ATP from ADP in the presence of a proton gradient across the membrane. The gamma chain is believed to be important in regulating ATPase activity and the flow of protons through the CF(0) complex. In Brucella canis (strain ATCC 23365 / NCTC 10854 / RM-666), this protein is ATP synthase gamma chain.